The sequence spans 523 residues: Transcription initiation factor TFIID subunit 4 (523 aa).

2 disordered regions span residues 1–100 and 185–241; these read MSLP…AASD and ASVE…VQGG. Positions 58 to 77 are enriched in low complexity; the sequence is QMQPPRQPIQQQMQHFQSPS. The span at 78 to 87 shows a compositional bias: pro residues; it reads PMAPQGPPGT. The TAFH domain occupies 101-199; the sequence is DKNVTKCVRF…VNPPPGYVFN (99 aa). The segment covering 204 to 213 has biased composition (pro residues); it reads PGPPQPPPPQ. Residues 214–236 are compositionally biased toward low complexity; that stretch reads QQSQQQPPLEMRQIPNPNQIPPQ. Residues 329 to 383 form a histone-fold region; that stretch reads LKPDEVLNRITKRMMSSCSVEEEALVAISDAVESHLRELITLMAGVAEHRVESLR. The necessary and sufficient for interaction with oma-1 stretch occupies residues 333-382; sequence EVLNRITKRMMSSCSVEEEALVAISDAVESHLRELITLMAGVAEHRVESL. Residues 407–435 are disordered; that stretch reads QEEELRESREKESLIRMSKNKNSGKETIE.

Belongs to the TAF4 family. Component of the TFIID basal transcription factor complex, composed of TATA-box-binding protein tbp-1, and a number of TBP-associated factors (TAFs). Interacts (via histone-fold domain) with oma-1 (via histone-fold domain). May also interact with oma-2. Interacts (via histone-fold domain) with taf-12 (via the histone-fold domain).

It localises to the nucleus. The protein resides in the cytoplasm. In terms of biological role, the TFIID basal transcription factor complex plays a major role in the initiation of RNA polymerase II (Pol II)-dependent transcription. TFIID recognizes and binds promoters via its subunit tbp-1, a TATA-box-binding protein, and promotes assembly of the pre-initiation complex (PIC). The TFIID complex consists of tbp-1 and TBP-associated factors (TAFs), including taf-4. Essential for early embryonic development, probably acting via activating transcription initiation by RNA polymerase II, as part of the TFIID complex. In early embryos, but not oocytes, remains, presumably inactive, in the cytoplasm as a result of binding to oma-1. Upon degradation of oma-1, taf-4 is released and bound by taf-12, and the taf-4/12 heterodimer translocates to the nucleus and transcriptional repression is relieved. Involved in lifespan extension in a manner dependent upon mitochondrial function. Plays a role in modulating polyribosome formation. The polypeptide is Transcription initiation factor TFIID subunit 4 (Caenorhabditis elegans).